Here is a 328-residue protein sequence, read N- to C-terminus: Phenylalanine--tRNA ligase alpha subunit (328 aa).

Residue E245 coordinates Mg(2+).

This sequence belongs to the class-II aminoacyl-tRNA synthetase family. Phe-tRNA synthetase alpha subunit type 1 subfamily. As to quaternary structure, tetramer of two alpha and two beta subunits. It depends on Mg(2+) as a cofactor.

It localises to the cytoplasm. The catalysed reaction is tRNA(Phe) + L-phenylalanine + ATP = L-phenylalanyl-tRNA(Phe) + AMP + diphosphate + H(+). The polypeptide is Phenylalanine--tRNA ligase alpha subunit (Helicobacter pylori (strain Shi470)).